The chain runs to 106 residues: Large ribosomal subunit protein eL42 (106 aa).

The protein belongs to the eukaryotic ribosomal protein eL42 family.

The protein is Large ribosomal subunit protein eL42 (RPL44) of Candida tropicalis (Yeast).